A 1106-amino-acid chain; its full sequence is Protein kinase C (1106 aa).

The region spanning 1 to 67 is the REM-1 1 domain; it reads MDGDDLIASV…MRELQLRQMK (67 aa). The segment at 65 to 138 is disordered; it reads QMKQEGASPT…PRPFAPVPKA (74 aa). Residues 79–93 show a composition bias toward pro residues; that stretch reads PPNPDGSAPVPPPKD. The REM-1 2 domain maps to 149-226; that stretch reads KYDTPYLGPK…LKRYEDLHVD (78 aa). The 119-residue stretch at 232 to 350 folds into the C2 domain; it reads APDDESLSTP…MRRKKIESEF (119 aa). The segment covering 361–370 has biased composition (basic and acidic residues); the sequence is MEHGAAHGRQ. The segment at 361–400 is disordered; it reads MEHGAAHGRQDAGGAPGSSNRPPSGGHSGGPGQGYAGGAP. The span at 386 to 400 shows a compositional bias: gly residues; sequence GHSGGPGQGYAGGAP. 2 Phorbol-ester/DAG-type zinc fingers span residues 460-508 and 528-578; these read GHKF…VTKC and PHRF…PDFC. Polar residues-rich tracts occupy residues 600 to 609 and 658 to 668; these read KSASVSSGLS and YIPPQSPTAAQ. Disordered stretches follow at residues 600–625 and 658–719; these read KSASVSSGLSGRTLRPGGPPQAPQDN and YIPP…HAHY. Residues 683–693 are compositionally biased toward low complexity; sequence AAAAAAAAAAA. The Protein kinase domain occupies 781–1040; that stretch reads FNFLAVLGKG…AQEVMSHAFF (260 aa). ATP-binding positions include 787–795 and Lys810; that span reads LGKGNFGKV. Asp906 acts as the Proton acceptor in catalysis. In terms of domain architecture, AGC-kinase C-terminal spans 1041–1106; the sequence is RNINWDDIYH…RGFSYTADFA (66 aa). Thr1082 bears the Phosphothreonine mark. At Ser1100 the chain carries Phosphoserine. Tyr1101 carries the phosphotyrosine modification.

It belongs to the protein kinase superfamily. AGC Ser/Thr protein kinase family. PKC subfamily. Interacts with hsp90.

It carries out the reaction L-seryl-[protein] + ATP = O-phospho-L-seryl-[protein] + ADP + H(+). The catalysed reaction is L-threonyl-[protein] + ATP = O-phospho-L-threonyl-[protein] + ADP + H(+). Protein kinase C; part of cell wall integrity (CWI) signaling pathway composed of pkcA, the bck1-mkk2-mpka MAPK cascade and the downstream rlmA transcription regulator. The CWI signaling pathway regulates cell wall integrity and pyomelanin formation. CWI also controls oxidative stress response, gliotoxin production, iron adaptation and asexual development. Finally, CWI is constitutively required for A.fumigatus to cope with the temperature increase found in the mammalian lung environment, during infection. Modulates the expression of fumiquinazoline cluster during conidiogenesis. The polypeptide is Protein kinase C (Aspergillus fumigatus (strain ATCC MYA-4609 / CBS 101355 / FGSC A1100 / Af293) (Neosartorya fumigata)).